A 146-amino-acid polypeptide reads, in one-letter code: Hemoglobin subunit beta-2 (146 aa).

A Globin domain is found at 2 to 146 (HWTAEEKQLV…VAHALAYHYH (145 aa)). Positions 63 and 92 each coordinate heme b.

This sequence belongs to the globin family. In terms of assembly, there are three forms of hemoglobin in Sphenodon: A, A' and D. Hb A is a tetramer of two alpha-A and two beta-1, Hb A' is a tetramer of two alpha-a and two beta-2, Hb D is a tetramer of two alpha-D and two beta-2.

In terms of biological role, involved in oxygen transport from the lung to the various peripheral tissues. The sequence is that of Hemoglobin subunit beta-2 (HBB2) from Sphenodon punctatus (Tuatara).